The primary structure comprises 407 residues: Peptidase T (407 aa).

His-82 is a Zn(2+) binding site. Residue Asp-84 is part of the active site. Residue Asp-143 coordinates Zn(2+). Glu-177 functions as the Proton acceptor in the catalytic mechanism. Residues Glu-178, Asp-200, and His-382 each contribute to the Zn(2+) site.

This sequence belongs to the peptidase M20B family. The cofactor is Zn(2+).

It localises to the cytoplasm. It catalyses the reaction Release of the N-terminal residue from a tripeptide.. Its function is as follows. Cleaves the N-terminal amino acid of tripeptides. The protein is Peptidase T of Streptococcus pyogenes serotype M4 (strain MGAS10750).